A 343-amino-acid polypeptide reads, in one-letter code: Methionine import ATP-binding protein MetN 1 (343 aa).

In terms of domain architecture, ABC transporter spans 2-241 (IKLTHISKVF…PKTPLAQQFI (240 aa)). 38–45 (GASGAGKS) serves as a coordination point for ATP.

It belongs to the ABC transporter superfamily. Methionine importer (TC 3.A.1.24) family. As to quaternary structure, the complex is composed of two ATP-binding proteins (MetN), two transmembrane proteins (MetI) and a solute-binding protein (MetQ).

Its subcellular location is the cell inner membrane. The catalysed reaction is L-methionine(out) + ATP + H2O = L-methionine(in) + ADP + phosphate + H(+). It carries out the reaction D-methionine(out) + ATP + H2O = D-methionine(in) + ADP + phosphate + H(+). Functionally, part of the ABC transporter complex MetNIQ involved in methionine import. Responsible for energy coupling to the transport system. This Yersinia pestis bv. Antiqua (strain Antiqua) protein is Methionine import ATP-binding protein MetN 1.